Consider the following 220-residue polypeptide: Protein DGCR6L (220 aa).

The stretch at 76–159 (KSLYNQRLRL…ADQQSTLEKA (84 aa)) forms a coiled coil.

Belongs to the gonadal family. In terms of tissue distribution, widely expressed in fetal and adult tissues. Highest expression in liver, heart and skeletal muscle. Lower levels in pancreas and placenta. Weak expression in brain.

Its subcellular location is the nucleus. Functionally, may play a role in neural crest cell migration into the third and fourth pharyngeal pouches. In Homo sapiens (Human), this protein is Protein DGCR6L (DGCR6L).